A 409-amino-acid chain; its full sequence is Mitochondrial import inner membrane translocase subunit TIM50-B (409 aa).

The N-terminal 42 residues, 1–42 (MSLIAIERVLCGWPKICRKLIVTSRSLTSGLRRALVKQPRKG), are a transit peptide targeting the mitochondrion. Topologically, residues 43-127 (GDVGKPGMEL…ELERAFRRMK (85 aa)) are mitochondrial matrix. The interval 93–114 (PQTSEESNDEESRERRKLEEEE) is disordered. Residues 102-111 (EESRERRKLE) show a composition bias toward basic and acidic residues. The helical transmembrane segment at 128-148 (LGFGLFGIGSMLFSFWAIYFY) threads the bilayer. Residues 149–409 (GRPSLDEHGN…KNWTRGFINH (261 aa)) lie on the Mitochondrial intermembrane side of the membrane. The FCP1 homology domain maps to 205 to 348 (YVQPPYTLVL…FELTSFLSVL (144 aa)).

It belongs to the TIM50 family. As to quaternary structure, component of the TIM23 complex at least composed of Tim23, Tim17 (Tim17a1, Tim17a2 or Tim17b1) and a Tim50. Exclusively expressed in the testis.

It localises to the mitochondrion inner membrane. Its function is as follows. Essential component of the TIM23 complex, a complex that mediates the translocation of transit peptide-containing proteins across the mitochondrial inner membrane. This chain is Mitochondrial import inner membrane translocase subunit TIM50-B (ttm2), found in Drosophila melanogaster (Fruit fly).